The following is a 723-amino-acid chain: Nicastrin (723 aa).

The first 16 residues, 1 to 16 (MKKWLVIVLIIAGIRC), serve as a signal peptide directing secretion. The Extracellular portion of the chain corresponds to 17-678 (DGFSDQVFRT…ESVNLYLMED (662 aa)). N-linked (GlcNAc...) asparagine glycosylation is found at asparagine 40, asparagine 181, asparagine 271, asparagine 328, asparagine 409, and asparagine 627. The helical transmembrane segment at 679–699 (ASFEYTMILIAVISALLSIFA) threads the bilayer. The Cytoplasmic portion of the chain corresponds to 700–723 (VGRCSETTFIVDEGEPAAEGGEPL).

The protein belongs to the nicastrin family. Component of the gamma-secretase complex, a complex probably composed of the presenilin homodimer (sel-12, hop-1 or spe-4), nicastrin (aph-2), aph-1 and pen-2.

It localises to the membrane. Its function is as follows. Essential subunit of the gamma-secretase complex, an endoprotease complex that catalyzes the intramembrane cleavage of integral membrane proteins such as Notch (glp-1 or lin-12). It may represents a stabilizing cofactor required for the assembly of the gamma-secretase complex. This is Nicastrin (aph-2) from Caenorhabditis elegans.